We begin with the raw amino-acid sequence, 373 residues long: 3 beta-hydroxysteroid dehydrogenase/Delta 5--&gt;4-isomerase type 4 (373 aa).

Y155 acts as the Proton acceptor in catalysis. An NAD(+)-binding site is contributed by K159. A helical transmembrane segment spans residues 288 to 308; it reads LPLLYWLAFLLEIVSFFLHPV. Residue K350 is modified to N6-acetyllysine.

Belongs to the 3-beta-HSD family. In terms of tissue distribution, skin, placenta, also detectable in ovary and adrenal gland.

It is found in the endoplasmic reticulum membrane. The protein resides in the mitochondrion membrane. The enzyme catalyses a 3beta-hydroxy-Delta(5)-steroid + NAD(+) = a 3-oxo-Delta(5)-steroid + NADH + H(+). The catalysed reaction is a 3-oxo-Delta(5)-steroid = a 3-oxo-Delta(4)-steroid. Its pathway is lipid metabolism; steroid biosynthesis. 3-beta-HSD is a bifunctional enzyme, that catalyzes the oxidative conversion of Delta(5)-ene-3-beta-hydroxy steroid, and the oxidative conversion of ketosteroids. The 3-beta-HSD enzymatic system plays a crucial role in the biosynthesis of all classes of hormonal steroids. The protein is 3 beta-hydroxysteroid dehydrogenase/Delta 5--&gt;4-isomerase type 4 (Hsd3b6) of Rattus norvegicus (Rat).